Here is a 487-residue protein sequence, read N- to C-terminus: Protein FAM221B (487 aa).

Polar residues-rich tracts occupy residues Met1–Thr13 and His36–His48. 2 disordered regions span residues Met1 to Thr103 and Gln132 to Arg289. Low complexity predominate over residues Pro81–Thr103. 2 stretches are compositionally biased toward basic and acidic residues: residues Glu227–Phe236 and Ala243–Glu253. Ser248 carries the post-translational modification Phosphoserine.

Belongs to the FAM221 family.

This Mus musculus (Mouse) protein is Protein FAM221B (Fam221b).